The chain runs to 51 residues: Astexin-1 (51 aa).

A propeptide spanning residues 1-28 (MHTPIISETVQPKTAGLIVLGKASAETR) is cleaved from the precursor. The isoaspartyl glycine isopeptide (Gly-Asp) cross-link spans 29 to 37 (GLSQGVEPD).

This lasso peptide is probably hydrolyzed to a linear form by the isopeptidase AtxE1, in vivo.

Functionally, shows weak antimicrobial activity against its phylogenetic relative Caulobacter crescentus. Does not show activity against other bacteria tested (E.coli, Vibrio sp, Burkhoderia thailandensis, and Salmonella newport). This is Astexin-1 from Asticcacaulis excentricus (strain ATCC 15261 / DSM 4724 / KCTC 12464 / NCIMB 9791 / VKM B-1370 / CB 48).